Reading from the N-terminus, the 390-residue chain is Aspartate carbamoyltransferase, chloroplastic (390 aa).

Residues 1–68 (MSIASSLTSA…NLTRNVGPVR (68 aa)) constitute a chloroplast transit peptide. Carbamoyl phosphate-binding residues include R136 and T137. UMP contacts are provided by R136 and T137. Residue K166 coordinates L-aspartate. The carbamoyl phosphate site is built by R187, H215, and Q218. Positions 187 and 215 each coordinate UMP. UMP is bound by residues R248 and R310. The L-aspartate site is built by R248 and R310. Carbamoyl phosphate is bound by residues L350 and P351.

This sequence belongs to the aspartate/ornithine carbamoyltransferase superfamily. ATCase family. In terms of assembly, homotrimer.

It localises to the plastid. Its subcellular location is the chloroplast. It carries out the reaction carbamoyl phosphate + L-aspartate = N-carbamoyl-L-aspartate + phosphate + H(+). Its pathway is pyrimidine metabolism; UMP biosynthesis via de novo pathway; (S)-dihydroorotate from bicarbonate: step 2/3. Its activity is regulated as follows. Feedback inhibited by UMP. In terms of biological role, catalyzes the condensation of carbamoyl phosphate and aspartate to form carbamoyl aspartate and inorganic phosphate, the committed step in the de novo pyrimidine nucleotide biosynthesis pathway. The polypeptide is Aspartate carbamoyltransferase, chloroplastic (PYRB) (Arabidopsis thaliana (Mouse-ear cress)).